Here is a 398-residue protein sequence, read N- to C-terminus: Beta-1,4-galactosyltransferase 1 (398 aa).

At 1 to 24 (MRLREPLLSGSAAMPGASLQRACR) the chain is on the cytoplasmic side. The helical; Signal-anchor for type II membrane protein transmembrane segment at 25 to 44 (LLVAVCALHLGVTLVYYLAG) threads the bilayer. The Lumenal portion of the chain corresponds to 45 to 398 (RDLSRLPQLV…QITVDIGTPS (354 aa)). Polar residues predominate over residues 61-76 (QGGSNSAAAIGQSSGE). The segment at 61–117 (QGGSNSAAAIGQSSGELRTGGARPPPPLGASSQPRPGGDSSPVVDSGPGPASNLTSV) is disordered. An N-linked (GlcNAc...) asparagine glycan is attached at Asn-113. Cys-130 and Cys-172 are disulfide-bonded. Residues 183 to 187 (PFRNR), 222 to 224 (FNR), 249 to 250 (VD), and Trp-310 contribute to the UDP-alpha-D-galactose site. The cysteines at positions 243 and 262 are disulfide-linked. Asp-250 is a binding site for Mn(2+). 312–315 (GEDD) serves as a coordination point for N-acetyl-D-glucosamine. His-343 provides a ligand contact to Mn(2+). 343–346 (HSRD) contacts UDP-alpha-D-galactose. Arg-355 is a binding site for N-acetyl-D-glucosamine.

It belongs to the glycosyltransferase 7 family. In terms of assembly, homodimer; and heterodimer with alpha-lactalbumin to form lactose synthase. Interacts (via N-terminal cytoplasmic domain) with UBE2Q1 (via N-terminus); the interaction is direct. Mn(2+) serves as cofactor. In terms of processing, the soluble form derives from the membrane forms by proteolytic processing. As to expression, ubiquitously expressed, but at very low levels in fetal and adult brain.

The protein localises to the golgi apparatus. It is found in the golgi stack membrane. Its subcellular location is the cell membrane. The protein resides in the cell surface. It localises to the cell projection. The protein localises to the filopodium. It is found in the secreted. It catalyses the reaction D-glucose + UDP-alpha-D-galactose = lactose + UDP + H(+). The enzyme catalyses an N-acetyl-beta-D-glucosaminyl derivative + UDP-alpha-D-galactose = a beta-D-galactosyl-(1-&gt;4)-N-acetyl-beta-D-glucosaminyl derivative + UDP + H(+). It carries out the reaction N-acetyl-D-glucosamine + UDP-alpha-D-galactose = beta-D-galactosyl-(1-&gt;4)-N-acetyl-D-glucosamine + UDP + H(+). The catalysed reaction is a beta-D-GlcNAc-(1-&gt;3)-beta-D-Gal-(1-&gt;4)-beta-D-Glc-(1&lt;-&gt;1)-Cer(d18:1(4E)) + UDP-alpha-D-galactose = a neolactoside nLc4Cer(d18:1(4E)) + UDP + H(+). It catalyses the reaction a beta-D-glucosylceramide + UDP-alpha-D-galactose = a beta-D-galactosyl-(1-&gt;4)-beta-D-glucosyl-(1&lt;-&gt;1)-ceramide + UDP + H(+). The enzyme catalyses a neolactoside IV(3)-beta-GlcNAc-nLc4Cer + UDP-alpha-D-galactose = a neolactoside nLc6Cer + UDP + H(+). It participates in protein modification; protein glycosylation. In terms of biological role, the Golgi complex form catalyzes the production of lactose in the lactating mammary gland and could also be responsible for the synthesis of complex-type N-linked oligosaccharides in many glycoproteins as well as the carbohydrate moieties of glycolipids. The cell surface form functions as a recognition molecule during a variety of cell to cell and cell to matrix interactions, as those occurring during development and egg fertilization, by binding to specific oligosaccharide ligands on opposing cells or in the extracellular matrix. The protein is Beta-1,4-galactosyltransferase 1 of Homo sapiens (Human).